Here is an 859-residue protein sequence, read N- to C-terminus: Bifunctional heparan sulfate N-deacetylase/N-sulfotransferase 1 (859 aa).

Over 1-13 the chain is Cytoplasmic; it reads MIITPYLNPRLVK. The chain crosses the membrane as a helical; Signal-anchor for type II membrane protein span at residues 14–34; it reads PLKWLAIIILLYFLYFSLFSI. The segment at 34-575 is heparan sulfate N-deacetylase 1; that stretch reads INKKPGKPRK…PRHQAILPPS (542 aa). The Lumenal portion of the chain corresponds to 35–859; sequence NKKPGKPRKP…WLEEAVRIRV (825 aa). N-linked (GlcNAc...) asparagine glycosylation is found at Asn-50, Asn-74, Asn-210, Asn-262, Asn-378, and Asn-429. Residues 576–859 are heparan sulfate N-sulfotransferase 1; the sequence is MSCSKKSLPD…WLEEAVRIRV (284 aa). Lys-593 acts as the For sulfotransferase activity in catalysis. Position 593 to 597 (593 to 597) interacts with 3'-phosphoadenylyl sulfate; that stretch reads KTGST. 2 N-linked (GlcNAc...) asparagine glycosylation sites follow: Asn-608 and Asn-643. Ser-687 is a 3'-phosphoadenylyl sulfate binding site. N-linked (GlcNAc...) asparagine glycosylation is present at Asn-715. A disulfide bond links Cys-796 and Cys-805. Residue 810–814 participates in 3'-phosphoadenylyl sulfate binding; it reads KGRKY.

It belongs to the sulfotransferase 1 family. NDST subfamily. In terms of assembly, monomer.

It is found in the golgi apparatus membrane. It catalyses the reaction alpha-D-glucosaminyl-[heparan sulfate](n) + 3'-phosphoadenylyl sulfate = N-sulfo-alpha-D-glucosaminyl-[heparan sulfate](n) + adenosine 3',5'-bisphosphate + 2 H(+). The protein operates within glycan metabolism; heparan sulfate biosynthesis. Its pathway is glycan metabolism; heparin biosynthesis. Its function is as follows. Essential bifunctional enzyme that catalyzes both the N-deacetylation and the N-sulfation of glucosamine (GlcNAc) of the glycosaminoglycan in heparan sulfate. Modifies the GlcNAc-GlcA disaccharide repeating sugar backbone to make N-sulfated heparosan, a prerequisite substrate for later modifications in heparin biosynthesis. In Caenorhabditis briggsae, this protein is Bifunctional heparan sulfate N-deacetylase/N-sulfotransferase 1 (hst-1).